The chain runs to 361 residues: Peptide chain release factor 1 (361 aa).

Gln235 carries the N5-methylglutamine modification.

This sequence belongs to the prokaryotic/mitochondrial release factor family. In terms of processing, methylated by PrmC. Methylation increases the termination efficiency of RF1.

The protein localises to the cytoplasm. In terms of biological role, peptide chain release factor 1 directs the termination of translation in response to the peptide chain termination codons UAG and UAA. The chain is Peptide chain release factor 1 from Buchnera aphidicola subsp. Acyrthosiphon pisum (strain 5A).